A 327-amino-acid polypeptide reads, in one-letter code: AA9 family lytic polysaccharide monooxygenase B (327 aa).

The first 19 residues, M1–A19, serve as a signal peptide directing secretion. Cu(2+) contacts are provided by H20 and H98. C68 and C192 are disulfide-bonded. Residues H178 and Q187 each coordinate O2. Y189 is a binding site for Cu(2+). The segment covering S264–P280 has biased composition (low complexity). The segment at S264–G284 is disordered. One can recognise a CBM1 domain in the interval C291–V327. Residue N317 is glycosylated (N-linked (GlcNAc...) asparagine).

It belongs to the polysaccharide monooxygenase AA9 family. Requires Cu(2+) as cofactor.

Its subcellular location is the secreted. It catalyses the reaction [(1-&gt;4)-beta-D-glucosyl]n+m + reduced acceptor + O2 = 4-dehydro-beta-D-glucosyl-[(1-&gt;4)-beta-D-glucosyl]n-1 + [(1-&gt;4)-beta-D-glucosyl]m + acceptor + H2O.. In terms of biological role, lytic polysaccharide monooxygenase (LPMO) that depolymerizes crystalline and amorphous polysaccharides via the oxidation of scissile alpha- or beta-(1-4)-glycosidic bonds, yielding C1 or C4 oxidation products. Catalysis by LPMOs requires the reduction of the active-site copper from Cu(II) to Cu(I) by a reducing agent and H(2)O(2) or O(2) as a cosubstrate. This Podospora anserina (strain S / ATCC MYA-4624 / DSM 980 / FGSC 10383) (Pleurage anserina) protein is AA9 family lytic polysaccharide monooxygenase B (LPMO9B).